A 531-amino-acid chain; its full sequence is Probable calcium-binding mitochondrial carrier F17E5.2 (531 aa).

EF-hand domains follow at residues 70-105, 106-135, 136-171, and 172-207; these read EKEK…QAHI, PASV…NYVI, AHEA…MGVN, and LDDQ…YPST. Ca(2+) is bound by residues D83, D85, D87, S89, and D94. Positions 149, 151, 153, 155, and 160 each coordinate Ca(2+). Solcar repeat units lie at residues 242–328, 338–424, and 435–525; these read GVWW…IKRW, LSTI…LKSM, and PGVL…VRKQ. 6 helical membrane passes run 248 to 265, 303 to 322, 348 to 361, 399 to 418, 441 to 458, and 500 to 517; these read LVAG…TAPF, GNGI…FMCY, SSAG…IYPM, GYLP…LTVY, LACG…SYPL, and GITP…ISYV.

The protein belongs to the mitochondrial carrier (TC 2.A.29) family.

Its subcellular location is the mitochondrion inner membrane. Calcium-dependent mitochondrial solute carrier. The polypeptide is Probable calcium-binding mitochondrial carrier F17E5.2 (Caenorhabditis elegans).